Here is a 230-residue protein sequence, read N- to C-terminus: Demethylmenaquinone methyltransferase (230 aa).

Residues Thr-57, Asp-77, Asp-101–Ile-102, and Ser-118 contribute to the S-adenosyl-L-methionine site.

Belongs to the class I-like SAM-binding methyltransferase superfamily. MenG/UbiE family.

It carries out the reaction a 2-demethylmenaquinol + S-adenosyl-L-methionine = a menaquinol + S-adenosyl-L-homocysteine + H(+). It functions in the pathway quinol/quinone metabolism; menaquinone biosynthesis; menaquinol from 1,4-dihydroxy-2-naphthoate: step 2/2. Its function is as follows. Methyltransferase required for the conversion of demethylmenaquinol (DMKH2) to menaquinol (MKH2). The chain is Demethylmenaquinone methyltransferase from Chlamydia felis (strain Fe/C-56) (Chlamydophila felis).